Consider the following 434-residue polypeptide: Glutamate-1-semialdehyde 2,1-aminomutase (434 aa).

Lys-273 carries the post-translational modification N6-(pyridoxal phosphate)lysine.

It belongs to the class-III pyridoxal-phosphate-dependent aminotransferase family. HemL subfamily. Homodimer. It depends on pyridoxal 5'-phosphate as a cofactor.

The protein localises to the cytoplasm. It catalyses the reaction (S)-4-amino-5-oxopentanoate = 5-aminolevulinate. Its pathway is porphyrin-containing compound metabolism; protoporphyrin-IX biosynthesis; 5-aminolevulinate from L-glutamyl-tRNA(Glu): step 2/2. The chain is Glutamate-1-semialdehyde 2,1-aminomutase from Polynucleobacter asymbioticus (strain DSM 18221 / CIP 109841 / QLW-P1DMWA-1) (Polynucleobacter necessarius subsp. asymbioticus).